The sequence spans 308 residues: Reticulon-like protein 1 (308 aa).

Polar residues-rich tracts occupy residues 1 to 17 (MSEQHSLNPFESGSVTA) and 41 to 66 (PSTELPSATSFPSALPNSENPVIQNI). 2 disordered regions span residues 1–22 (MSEQHSLNPFESGSVTASDVAA) and 41–92 (PSTE…CPVS). Asn65 carries N-linked (GlcNAc...) asparagine glycosylation. The span at 67-81 (SSSSSEPHHTSQSTP) shows a compositional bias: low complexity. 2 N-linked (GlcNAc...) asparagine glycosylation sites follow: Asn113 and Asn135. Residues 127 to 308 (LWSVLTWKNT…TETINTTVNK (182 aa)) form the Reticulon domain. Helical transmembrane passes span 138 to 158 (CSFSTLMSILALVYVPSWINL), 166 to 186 (FRYVFLITSIIEFGGLFASNG), 233 to 253 (PILTFTASVAAFIEFFLSGFL), and 255 to 275 (YKSLFVWNVLFAFILPRLYVC). Asn303 is a glycosylation site (N-linked (GlcNAc...) asparagine).

As to quaternary structure, interacts with TTS1 and YOP1.

The protein resides in the endoplasmic reticulum membrane. Its subcellular location is the nucleus membrane. Functionally, required for the correct positioning of the cellular division plane by delimiting the actomyosin ring assembly at the cell equator. Overexpression causes cell lysis. This chain is Reticulon-like protein 1 (rtn1), found in Schizosaccharomyces pombe (strain 972 / ATCC 24843) (Fission yeast).